A 515-amino-acid chain; its full sequence is Bifunctional pantoate ligase/cytidylate kinase (515 aa).

The pantoate--beta-alanine ligase stretch occupies residues 1 to 279; that stretch reads MKVVETVARL…VGSTRLIDNV (279 aa). 31-38 serves as a coordination point for ATP; that stretch reads MGALHEGH. The active-site Proton donor is H38. Residue Q62 coordinates (R)-pantoate. Q62 serves as a coordination point for beta-alanine. 149–152 is an ATP binding site; it reads GQKD. Position 155 (Q155) interacts with (R)-pantoate. Residues V178 and 186–189 contribute to the ATP site; that span reads LSSR. The segment at 280–515 is cytidylate kinase; that stretch reads VLGQHHERRP…LYRDKVGGSV (236 aa).

The protein in the N-terminal section; belongs to the pantothenate synthetase family. In the C-terminal section; belongs to the cytidylate kinase family. Type 1 subfamily.

The protein resides in the cytoplasm. The enzyme catalyses (R)-pantoate + beta-alanine + ATP = (R)-pantothenate + AMP + diphosphate + H(+). It carries out the reaction CMP + ATP = CDP + ADP. The catalysed reaction is dCMP + ATP = dCDP + ADP. It functions in the pathway cofactor biosynthesis; (R)-pantothenate biosynthesis; (R)-pantothenate from (R)-pantoate and beta-alanine: step 1/1. Catalyzes the condensation of pantoate with beta-alanine in an ATP-dependent reaction via a pantoyl-adenylate intermediate. In terms of biological role, catalyzes the transfer of a phosphate group from ATP to either CMP or dCMP to form CDP or dCDP and ADP, respectively. This is Bifunctional pantoate ligase/cytidylate kinase from Gloeobacter violaceus (strain ATCC 29082 / PCC 7421).